The chain runs to 333 residues: Ribosomal RNA small subunit methyltransferase C (333 aa).

This sequence belongs to the methyltransferase superfamily. RsmC family. In terms of assembly, monomer.

The protein localises to the cytoplasm. The enzyme catalyses guanosine(1207) in 16S rRNA + S-adenosyl-L-methionine = N(2)-methylguanosine(1207) in 16S rRNA + S-adenosyl-L-homocysteine + H(+). In terms of biological role, specifically methylates the guanine in position 1207 of 16S rRNA in the 30S particle. The polypeptide is Ribosomal RNA small subunit methyltransferase C (Actinobacillus succinogenes (strain ATCC 55618 / DSM 22257 / CCUG 43843 / 130Z)).